A 242-amino-acid chain; its full sequence is MDLYYGSYRALRSISLEIPANRVTALIGPSGCGKSSFLRCLNRMNDLIPGARVEGTITLDGADIYAPGVDVVALRRRVGMVFQRPNPFPMSIYDNVAYGPRIHGERRKAVLDEIVEQSLRGAALWDEVKDRLHRSALGLSGGQQQRLCIARSLAVKPEVLLMDEPASALDPISTAKIEELIRELRAQYSIVIVTHNMQQAARISDYTAFFLSGELIEHGPTGTIFTNPKDQRTEDYITGRFG.

The 237-residue stretch at 1–237 (MDLYYGSYRA…PKDQRTEDYI (237 aa)) folds into the ABC transporter domain. An ATP-binding site is contributed by 28–35 (GPSGCGKS).

This sequence belongs to the ABC transporter superfamily. Phosphate importer (TC 3.A.1.7) family. In terms of assembly, the complex is composed of two ATP-binding proteins (PstB), two transmembrane proteins (PstC and PstA) and a solute-binding protein (PstS).

The protein localises to the cell membrane. The catalysed reaction is phosphate(out) + ATP + H2O = ADP + 2 phosphate(in) + H(+). Its function is as follows. Part of the ABC transporter complex PstSACB involved in phosphate import. Responsible for energy coupling to the transport system. This chain is Phosphate import ATP-binding protein PstB 1, found in Symbiobacterium thermophilum (strain DSM 24528 / JCM 14929 / IAM 14863 / T).